The following is a 258-amino-acid chain: uncharacterized protein (258 aa).

36–43 (GKAGTGKS) contacts ATP.

The protein belongs to the IIV-6 075L family.

This is an uncharacterized protein from Acheta domesticus (House cricket).